Consider the following 328-residue polypeptide: GMP reductase (328 aa).

The Thioimidate intermediate role is filled by C176. 205 to 228 (IIADGGIRTHGDIAKSVRFGATMV) provides a ligand contact to NADP(+).

It belongs to the IMPDH/GMPR family. GuaC type 2 subfamily.

The enzyme catalyses IMP + NH4(+) + NADP(+) = GMP + NADPH + 2 H(+). Catalyzes the irreversible NADPH-dependent deamination of GMP to IMP. It functions in the conversion of nucleobase, nucleoside and nucleotide derivatives of G to A nucleotides, and in maintaining the intracellular balance of A and G nucleotides. This chain is GMP reductase, found in Shouchella clausii (strain KSM-K16) (Alkalihalobacillus clausii).